Reading from the N-terminus, the 513-residue chain is Maturase K (513 aa).

It belongs to the intron maturase 2 family. MatK subfamily.

The protein resides in the plastid. It localises to the chloroplast. Functionally, usually encoded in the trnK tRNA gene intron. Probably assists in splicing its own and other chloroplast group II introns. The protein is Maturase K of Arundo donax (Giant reed).